An 82-amino-acid chain; its full sequence is uncharacterized protein (82 aa).

This is an uncharacterized protein from Archaeoglobus fulgidus (strain ATCC 49558 / DSM 4304 / JCM 9628 / NBRC 100126 / VC-16).